Here is a 227-residue protein sequence, read N- to C-terminus: Uracil-DNA glycosylase (227 aa).

The active-site Proton acceptor is the Asp-65.

It belongs to the uracil-DNA glycosylase (UDG) superfamily. UNG family.

It is found in the cytoplasm. It carries out the reaction Hydrolyzes single-stranded DNA or mismatched double-stranded DNA and polynucleotides, releasing free uracil.. Functionally, excises uracil residues from the DNA which can arise as a result of misincorporation of dUMP residues by DNA polymerase or due to deamination of cytosine. The chain is Uracil-DNA glycosylase from Buchnera aphidicola subsp. Cinara cedri (strain Cc).